Reading from the N-terminus, the 491-residue chain is UDP-N-acetylmuramate--L-alanine ligase (491 aa).

An ATP-binding site is contributed by 126-132; sequence GTHGKTT.

It belongs to the MurCDEF family.

The protein resides in the cytoplasm. It carries out the reaction UDP-N-acetyl-alpha-D-muramate + L-alanine + ATP = UDP-N-acetyl-alpha-D-muramoyl-L-alanine + ADP + phosphate + H(+). The protein operates within cell wall biogenesis; peptidoglycan biosynthesis. In terms of biological role, cell wall formation. This is UDP-N-acetylmuramate--L-alanine ligase from Salmonella agona (strain SL483).